Reading from the N-terminus, the 156-residue chain is 2-C-methyl-D-erythritol 2,4-cyclodiphosphate synthase (156 aa).

A divalent metal cation is bound by residues Asp9 and His11. 4-CDP-2-C-methyl-D-erythritol 2-phosphate contacts are provided by residues 9–11 (DAH) and 36–37 (HS). His44 is a binding site for a divalent metal cation. 58–60 (NIG) is a binding site for 4-CDP-2-C-methyl-D-erythritol 2-phosphate.

This sequence belongs to the IspF family. As to quaternary structure, homotrimer. Requires a divalent metal cation as cofactor.

It carries out the reaction 4-CDP-2-C-methyl-D-erythritol 2-phosphate = 2-C-methyl-D-erythritol 2,4-cyclic diphosphate + CMP. It participates in isoprenoid biosynthesis; isopentenyl diphosphate biosynthesis via DXP pathway; isopentenyl diphosphate from 1-deoxy-D-xylulose 5-phosphate: step 4/6. Involved in the biosynthesis of isopentenyl diphosphate (IPP) and dimethylallyl diphosphate (DMAPP), two major building blocks of isoprenoid compounds. Catalyzes the conversion of 4-diphosphocytidyl-2-C-methyl-D-erythritol 2-phosphate (CDP-ME2P) to 2-C-methyl-D-erythritol 2,4-cyclodiphosphate (ME-CPP) with a corresponding release of cytidine 5-monophosphate (CMP). This Kosmotoga olearia (strain ATCC BAA-1733 / DSM 21960 / TBF 19.5.1) protein is 2-C-methyl-D-erythritol 2,4-cyclodiphosphate synthase.